We begin with the raw amino-acid sequence, 156 residues long: Lipoprotein signal peptidase (156 aa).

The next 2 helical transmembrane spans lie at 57–77 (LFLISITMVAILLMMFYLFIN) and 83–103 (ILKISLSLIISGAIGNLIDRI). Catalysis depends on residues D110 and D129. Residues 124 to 144 (IFNIADVLVSLGTILLIIFII) traverse the membrane as a helical segment.

The protein belongs to the peptidase A8 family.

The protein resides in the cell membrane. It catalyses the reaction Release of signal peptides from bacterial membrane prolipoproteins. Hydrolyzes -Xaa-Yaa-Zaa-|-(S,diacylglyceryl)Cys-, in which Xaa is hydrophobic (preferably Leu), and Yaa (Ala or Ser) and Zaa (Gly or Ala) have small, neutral side chains.. The protein operates within protein modification; lipoprotein biosynthesis (signal peptide cleavage). Its function is as follows. This protein specifically catalyzes the removal of signal peptides from prolipoproteins. In Clostridium tetani (strain Massachusetts / E88), this protein is Lipoprotein signal peptidase.